The primary structure comprises 87 residues: MCQNGAQGSFRGAPPLSKEDVIEMEGTVLENLPNAMFKVELENKHSLLCHISGRMRKNYIRILPGDKVTVQLTPYDLTKGRISYRHK.

The 72-residue stretch at 16 to 87 (LSKEDVIEME…TKGRISYRHK (72 aa)) folds into the S1-like domain.

Belongs to the IF-1 family. As to quaternary structure, component of the 30S ribosomal translation pre-initiation complex which assembles on the 30S ribosome in the order IF-2 and IF-3, IF-1 and N-formylmethionyl-tRNA(fMet); mRNA recruitment can occur at any time during PIC assembly.

The protein resides in the cytoplasm. Its function is as follows. One of the essential components for the initiation of protein synthesis. Stabilizes the binding of IF-2 and IF-3 on the 30S subunit to which N-formylmethionyl-tRNA(fMet) subsequently binds. Helps modulate mRNA selection, yielding the 30S pre-initiation complex (PIC). Upon addition of the 50S ribosomal subunit IF-1, IF-2 and IF-3 are released leaving the mature 70S translation initiation complex. In Magnetococcus marinus (strain ATCC BAA-1437 / JCM 17883 / MC-1), this protein is Translation initiation factor IF-1.